The following is a 295-amino-acid chain: Giardin subunit alpha-1 (295 aa).

Annexin repeat units lie at residues 2–71 (PKVT…MDLF), 73–143 (DRHE…MEKW), 153–223 (GSPE…AHFA), and 226–293 (GMHR…TLWR).

The protein belongs to the annexin family. Giardin subunit alpha subfamily.

Its subcellular location is the cytoplasm. The protein localises to the cytoskeleton. Giardins are involved in parasite attachment to the intestinal mucosa and in the cytoskeletal disassembly and reassembly that marks the transition from infectious trophozoite to transmissible cyst. They may interact with other cytoskeletal proteins such as microtubules in the microribbons or crossbridges, to maintain the integrity of the ventral disk. In Giardia intestinalis (Giardia lamblia), this protein is Giardin subunit alpha-1.